A 570-amino-acid polypeptide reads, in one-letter code: Proline--tRNA ligase (570 aa).

This sequence belongs to the class-II aminoacyl-tRNA synthetase family. ProS type 1 subfamily. In terms of assembly, homodimer.

It localises to the cytoplasm. It carries out the reaction tRNA(Pro) + L-proline + ATP = L-prolyl-tRNA(Pro) + AMP + diphosphate. Its function is as follows. Catalyzes the attachment of proline to tRNA(Pro) in a two-step reaction: proline is first activated by ATP to form Pro-AMP and then transferred to the acceptor end of tRNA(Pro). As ProRS can inadvertently accommodate and process non-cognate amino acids such as alanine and cysteine, to avoid such errors it has two additional distinct editing activities against alanine. One activity is designated as 'pretransfer' editing and involves the tRNA(Pro)-independent hydrolysis of activated Ala-AMP. The other activity is designated 'posttransfer' editing and involves deacylation of mischarged Ala-tRNA(Pro). The misacylated Cys-tRNA(Pro) is not edited by ProRS. This chain is Proline--tRNA ligase, found in Clostridium beijerinckii (strain ATCC 51743 / NCIMB 8052) (Clostridium acetobutylicum).